We begin with the raw amino-acid sequence, 558 residues long: Thermosome subunit alpha (558 aa).

The disordered stretch occupies residues 536–558 (TEKGKKEGGEGAGAETPGAPSLE). Positions 548–558 (GAETPGAPSLE) are enriched in low complexity.

It belongs to the TCP-1 chaperonin family. In terms of assembly, forms a Heterooligomeric complex of two stacked eight-membered rings.

Its function is as follows. Molecular chaperone; binds unfolded polypeptides in vitro, and has a weak ATPase activity. This Sulfolobus acidocaldarius (strain ATCC 33909 / DSM 639 / JCM 8929 / NBRC 15157 / NCIMB 11770) protein is Thermosome subunit alpha (thsA).